The following is a 130-amino-acid chain: Small ribosomal subunit protein uS9 (130 aa).

The tract at residues 109–130 (RMKERRKYGLKKARKAPQFSKR) is disordered. The segment covering 111–130 (KERRKYGLKKARKAPQFSKR) has biased composition (basic residues).

The protein belongs to the universal ribosomal protein uS9 family.

The sequence is that of Small ribosomal subunit protein uS9 from Caldanaerobacter subterraneus subsp. tengcongensis (strain DSM 15242 / JCM 11007 / NBRC 100824 / MB4) (Thermoanaerobacter tengcongensis).